A 137-amino-acid polypeptide reads, in one-letter code: Large-conductance mechanosensitive channel (137 aa).

2 helical membrane passes run 10–30 (FAMR…AAFG) and 76–96 (GVFI…FMAI).

This sequence belongs to the MscL family. As to quaternary structure, homopentamer.

The protein resides in the cell inner membrane. In terms of biological role, channel that opens in response to stretch forces in the membrane lipid bilayer. May participate in the regulation of osmotic pressure changes within the cell. The protein is Large-conductance mechanosensitive channel of Klebsiella pneumoniae subsp. pneumoniae (strain ATCC 700721 / MGH 78578).